We begin with the raw amino-acid sequence, 80 residues long: RNA-binding protein Hfq (80 aa).

Positions 10–70 (DLFLNTVRKQ…ISTIMPGQPM (61 aa)) constitute a Sm domain.

It belongs to the Hfq family. Homohexamer.

Its function is as follows. RNA chaperone that binds small regulatory RNA (sRNAs) and mRNAs to facilitate mRNA translational regulation in response to envelope stress, environmental stress and changes in metabolite concentrations. Also binds with high specificity to tRNAs. The protein is RNA-binding protein Hfq of Agrobacterium fabrum (strain C58 / ATCC 33970) (Agrobacterium tumefaciens (strain C58)).